The following is a 358-amino-acid chain: Protein-glutamate methylesterase/protein-glutamine glutaminase 2 (358 aa).

The region spanning 8 to 125 is the Response regulatory domain; sequence RVLIVDDSAV…ARGLEGYAEE (118 aa). D59 is modified (4-aspartylphosphate). The 196-residue stretch at 157–352 folds into the CheB-type methylesterase domain; it reads PMPGSALRFR…LDRVAERLLA (196 aa). Active-site residues include S177, H203, and D299.

This sequence belongs to the CheB family. Phosphorylated by CheA. Phosphorylation of the N-terminal regulatory domain activates the methylesterase activity.

It localises to the cytoplasm. The catalysed reaction is [protein]-L-glutamate 5-O-methyl ester + H2O = L-glutamyl-[protein] + methanol + H(+). It catalyses the reaction L-glutaminyl-[protein] + H2O = L-glutamyl-[protein] + NH4(+). Functionally, involved in chemotaxis. Part of a chemotaxis signal transduction system that modulates chemotaxis in response to various stimuli. Catalyzes the demethylation of specific methylglutamate residues introduced into the chemoreceptors (methyl-accepting chemotaxis proteins or MCP) by CheR. Also mediates the irreversible deamidation of specific glutamine residues to glutamic acid. The protein is Protein-glutamate methylesterase/protein-glutamine glutaminase 2 of Xanthomonas oryzae pv. oryzae (strain MAFF 311018).